We begin with the raw amino-acid sequence, 354 residues long: Guanine nucleotide-binding protein G(t) subunit alpha-3 (354 aa).

A disordered region spans residues 1–27 (MGSGISSESKESAKRSKELEKKLQEDA). The N-myristoyl glycine moiety is linked to residue Gly2. A compositionally biased stretch (basic and acidic residues) spans 8 to 27 (ESKESAKRSKELEKKLQEDA). The region spanning 32–354 (RTVKLLLLGA…KENLKDCGLF (323 aa)) is the G-alpha domain. The tract at residues 35-48 (KLLLLGAGESGKST) is G1 motif. GTP contacts are provided by residues 40–47 (GAGESGKS), 175–181 (LHSRVKT), 200–204 (DVGGQ), 269–272 (NKKD), and Ala326. Positions 47 and 181 each coordinate Mg(2+). Positions 173–181 (DVLHSRVKT) are G2 motif. A G3 motif region spans residues 196–205 (FRMFDVGGQR). A G4 motif region spans residues 265 to 272 (VLFLNKKD). Positions 324–329 (TCATDT) are G5 motif.

Belongs to the G-alpha family. G(i/o/t/z) subfamily. In terms of assembly, g proteins are composed of 3 units; alpha, beta and gamma, respectively GNAT3, GNB1 and GNG13 for Gustducin heterotrimer for bitter taste transduction. The alpha chain contains the guanine nucleotide binding site. Component of the TAS2R14-GNAT3 complex, consisting of TAS2R14, GNAT3, GNB1 and GNG2; within the complex interacts with TAS2R14; this complex plays a role in the perception of bitterness. Gustducin heterotrimer may also be composed of GNAT3, GNB3 and GNG13. Potential N-myristoylation may anchor alpha-subunit to the inner surface of plasma membrane. Expressed in taste buds (sensory organs of clustered epithelial cells) of the circumvallate, foliate and fungiform papillae of the tongue, as well as in nasoincisor, palatal and epiglottal taste buds at protein level. Expressed in enteroendocrine of the gut, in the lumenal pole of a subset of brush cells lining the stomach and the intestine at protein level. Detected in solitary cells throughout the respiratory track. Expressed also in spermatozoa.

The protein localises to the cytoplasm. Its function is as follows. Guanine nucleotide-binding protein (G protein) alpha subunit playing a prominent role in bitter and sweet taste transduction as well as in umami (monosodium glutamate, monopotassium glutamate, and inosine monophosphate) taste transduction. Transduction by this alpha subunit involves coupling of specific cell-surface receptors with a cGMP-phosphodiesterase; Activation of phosphodiesterase lowers intracellular levels of cAMP and cGMP which may open a cyclic nucleotide-suppressible cation channel leading to influx of calcium, ultimately leading to release of neurotransmitter. Indeed, denatonium and strychnine induce transient reduction in cAMP and cGMP in taste tissue, whereas this decrease is inhibited by GNAT3 antibody. Gustducin heterotrimer transduces response to bitter and sweet compounds via regulation of phosphodiesterase for alpha subunit, as well as via activation of phospholipase C for beta and gamma subunits, with ultimate increase inositol trisphosphate and increase of intracellular Calcium. GNAT3 can functionally couple to taste receptors to transmit intracellular signal: receptor heterodimer TAS1R2/TAS1R3 senses sweetness and TAS1R1/TAS1R3 transduces umami taste, whereas the T2R family GPCRs act as bitter sensors. Also functions as lumenal sugar sensors in the gut to control the expression of the Na+-glucose transporter SGLT1 in response to dietaty sugar, as well as the secretion of Glucagon-like peptide-1, GLP-1 and glucose-dependent insulinotropic polypeptide, GIP. Thus, may modulate the gut capacity to absorb sugars, with implications for the prevention and treatment of malabsorption syndromes and diet-related disorders including diabetes and obesity. The chain is Guanine nucleotide-binding protein G(t) subunit alpha-3 (Gnat3) from Rattus norvegicus (Rat).